Consider the following 178-residue polypeptide: ATP synthase subunit delta (178 aa).

It belongs to the ATPase delta chain family. In terms of assembly, F-type ATPases have 2 components, F(1) - the catalytic core - and F(0) - the membrane proton channel. F(1) has five subunits: alpha(3), beta(3), gamma(1), delta(1), epsilon(1). F(0) has three main subunits: a(1), b(2) and c(10-14). The alpha and beta chains form an alternating ring which encloses part of the gamma chain. F(1) is attached to F(0) by a central stalk formed by the gamma and epsilon chains, while a peripheral stalk is formed by the delta and b chains.

It is found in the cell inner membrane. Its function is as follows. F(1)F(0) ATP synthase produces ATP from ADP in the presence of a proton or sodium gradient. F-type ATPases consist of two structural domains, F(1) containing the extramembraneous catalytic core and F(0) containing the membrane proton channel, linked together by a central stalk and a peripheral stalk. During catalysis, ATP synthesis in the catalytic domain of F(1) is coupled via a rotary mechanism of the central stalk subunits to proton translocation. Functionally, this protein is part of the stalk that links CF(0) to CF(1). It either transmits conformational changes from CF(0) to CF(1) or is implicated in proton conduction. The sequence is that of ATP synthase subunit delta from Alcanivorax borkumensis (strain ATCC 700651 / DSM 11573 / NCIMB 13689 / SK2).